The chain runs to 123 residues: Small ribosomal subunit protein uS13 (123 aa).

The segment covering 99–113 (RGQRTHTNARTRKGG) has biased composition (basic residues). The tract at residues 99 to 123 (RGQRTHTNARTRKGGSRLAVAAKKK) is disordered.

The protein belongs to the universal ribosomal protein uS13 family. As to quaternary structure, part of the 30S ribosomal subunit. Forms a loose heterodimer with protein S19. Forms two bridges to the 50S subunit in the 70S ribosome.

Functionally, located at the top of the head of the 30S subunit, it contacts several helices of the 16S rRNA. In the 70S ribosome it contacts the 23S rRNA (bridge B1a) and protein L5 of the 50S subunit (bridge B1b), connecting the 2 subunits; these bridges are implicated in subunit movement. Contacts the tRNAs in the A and P-sites. The chain is Small ribosomal subunit protein uS13 from Anaplasma phagocytophilum (strain HZ).